The sequence spans 458 residues: Chromosomal replication initiator protein DnaA (458 aa).

The segment at 1-84 is domain I, interacts with DnaA modulators; the sequence is MENIWLEAQT…FHVAEEKPEA (84 aa). Residues 80 to 119 are compositionally biased toward basic and acidic residues; sequence EKPEAAHEAKPEKEAKPAREKERDKDKEKEKDREKEKKEL. The segment at 80–120 is disordered; that stretch reads EKPEAAHEAKPEKEAKPAREKERDKDKEKEKDREKEKKELV. The segment at 84-121 is domain II; that stretch reads AAHEAKPEKEAKPAREKERDKDKEKEKDREKEKKELVP. A domain III, AAA+ region region spans residues 122 to 338; sequence NLNPKYTFES…GMLIRLEAFA (217 aa). ATP-binding residues include G166, G168, K169, and T170. The tract at residues 339-458 is domain IV, binds dsDNA; it reads SLTGQEITLS…VEDIRKKLFT (120 aa).

This sequence belongs to the DnaA family. As to quaternary structure, oligomerizes as a right-handed, spiral filament on DNA at oriC.

Its subcellular location is the cytoplasm. Plays an essential role in the initiation and regulation of chromosomal replication. ATP-DnaA binds to the origin of replication (oriC) to initiate formation of the DNA replication initiation complex once per cell cycle. Binds the DnaA box (a 9 base pair repeat at the origin) and separates the double-stranded (ds)DNA. Forms a right-handed helical filament on oriC DNA; dsDNA binds to the exterior of the filament while single-stranded (ss)DNA is stabiized in the filament's interior. The ATP-DnaA-oriC complex binds and stabilizes one strand of the AT-rich DNA unwinding element (DUE), permitting loading of DNA polymerase. After initiation quickly degrades to an ADP-DnaA complex that is not apt for DNA replication. Binds acidic phospholipids. This Citrifermentans bemidjiense (strain ATCC BAA-1014 / DSM 16622 / JCM 12645 / Bem) (Geobacter bemidjiensis) protein is Chromosomal replication initiator protein DnaA.